Reading from the N-terminus, the 307-residue chain is UDP-3-O-acyl-N-acetylglucosamine deacetylase (307 aa).

His79, His239, and Asp243 together coordinate Zn(2+). His266 (proton donor) is an active-site residue.

The protein belongs to the LpxC family. It depends on Zn(2+) as a cofactor.

It catalyses the reaction a UDP-3-O-[(3R)-3-hydroxyacyl]-N-acetyl-alpha-D-glucosamine + H2O = a UDP-3-O-[(3R)-3-hydroxyacyl]-alpha-D-glucosamine + acetate. The protein operates within glycolipid biosynthesis; lipid IV(A) biosynthesis; lipid IV(A) from (3R)-3-hydroxytetradecanoyl-[acyl-carrier-protein] and UDP-N-acetyl-alpha-D-glucosamine: step 2/6. Catalyzes the hydrolysis of UDP-3-O-myristoyl-N-acetylglucosamine to form UDP-3-O-myristoylglucosamine and acetate, the committed step in lipid A biosynthesis. This is UDP-3-O-acyl-N-acetylglucosamine deacetylase from Tolumonas auensis (strain DSM 9187 / NBRC 110442 / TA 4).